Reading from the N-terminus, the 170-residue chain is UPF0220 protein C8D2.02c (170 aa).

4 helical membrane passes run 23 to 43 (LGVYFAGIMFASAVWVFVDAA), 54 to 74 (LHITFIDWIPFLCSILGIVIV), 101 to 121 (ILFIGFALLAGGLGGSFTVFI), and 136 to 156 (MGSANIISNILFMISATALWI).

Belongs to the UPF0220 family.

It is found in the membrane. This Schizosaccharomyces pombe (strain 972 / ATCC 24843) (Fission yeast) protein is UPF0220 protein C8D2.02c.